Reading from the N-terminus, the 334-residue chain is Probable 3-hydroxyisobutyrate dehydrogenase-like 1, mitochondrial (334 aa).

The N-terminal 23 residues, 1-23, are a transit peptide targeting the mitochondrion; it reads MPLLLRRFPSPSVVSSFFLRRSM. Ala-24 is subject to N-acetylalanine. NAD(+) is bound by residues 38 to 67 and Thr-133; that span reads TKIG…TVFN. Residue Lys-207 is part of the active site. Residue Lys-275 participates in NAD(+) binding.

The protein belongs to the HIBADH-related family. 3-hydroxyisobutyrate dehydrogenase subfamily.

It is found in the mitochondrion. It carries out the reaction 3-hydroxy-2-methylpropanoate + NAD(+) = 2-methyl-3-oxopropanoate + NADH + H(+). Its pathway is amino-acid degradation; L-valine degradation. In Arabidopsis thaliana (Mouse-ear cress), this protein is Probable 3-hydroxyisobutyrate dehydrogenase-like 1, mitochondrial.